The following is a 140-amino-acid chain: Large ribosomal subunit protein uL11 (140 aa).

This sequence belongs to the universal ribosomal protein uL11 family. Part of the ribosomal stalk of the 50S ribosomal subunit. Interacts with L10 and the large rRNA to form the base of the stalk. L10 forms an elongated spine to which L12 dimers bind in a sequential fashion forming a multimeric L10(L12)X complex. In terms of processing, one or more lysine residues are methylated.

Functionally, forms part of the ribosomal stalk which helps the ribosome interact with GTP-bound translation factors. This is Large ribosomal subunit protein uL11 from Geobacter sp. (strain M21).